A 167-amino-acid polypeptide reads, in one-letter code: MERFVVTAPPARNRSKTALYVTPLDRVTEFGGELHEDGGKLFCTSCNVVLNHVRKSAISDHLKSKTHTKRKAEFEEQNVRKKQRPLTASLQCNSPAQTEKASVIQDFVKMCLEANIPLEKADHPAVRAFLSRHVKNGGSIPKSDQLRRAYLPDGYENENQLLSSQDC.

Residue serine 56 is modified to Phosphoserine. Positions 65-86 (KTHTKRKAEFEEQNVRKKQRPL) are disordered. The Nuclear localization signal signature appears at 80–84 (RKKQR). Residue serine 164 is modified to Phosphoserine.

The protein resides in the nucleus. Functionally, binds to nonmethylated 5'-d(CGG)(n)-3' trinucleotide repeats in the FMR1 promoter. May play a role in regulating FMR1 promoter. This Mus musculus (Mouse) protein is CGG triplet repeat-binding protein 1 (Cggbp1).